A 240-amino-acid chain; its full sequence is MFQRLNKMFVGEVSSSSNQEPEFNEKEDDEWILVDFIDTCTGFSAEEEEEEEDISEESPTEHPSVFSCLPASLECLADTSDSCFLQFESCPMEESWFITPPPCFTAGGLTTIKVETSPMENLLIEHPSMSVYAVHNSCPGLSEATRGTDELHSPSSPRVEAQNEMGQHIHCYVAALAAHTTFLEQPKSFRPSQWIKEHSERQPLNRNSLRRQNLTRDCHPRQVKHNGWVVHQPCPRQYNY.

Residues 25–37 (EKEDDEWILVDFI) carry the LIR motif.

In terms of assembly, interacts with p53/TP53 and HIPK2. Interacts with PRKCG, GABARAP, GABARAPL1, GABARAPL2, MAP1LC3A, MAP1LC3B and MAP1LC3C. Ubiquitously expressed.

It localises to the cytoplasm. It is found in the cytosol. Its subcellular location is the nucleus. The protein resides in the PML body. The protein localises to the cytoplasmic vesicle. It localises to the autophagosome. In terms of biological role, antiproliferative and proapoptotic protein involved in cell stress response which acts as a dual regulator of transcription and autophagy. Acts as a positive regulator of autophagy. In response to cellular stress or activation of autophagy, relocates to autophagosomes where it interacts with autophagosome-associated proteins GABARAP, GABARAPL1/L2, MAP1LC3A/B/C and regulates autophagy. Acts as an antioxidant and plays a major role in p53/TP53-driven oxidative stress response. Possesses both a p53/TP53-independent intracellular reactive oxygen species (ROS) regulatory function and a p53/TP53-dependent transcription regulatory function. Positively regulates p53/TP53 and p73/TP73 and stimulates their capacity to induce apoptosis and regulate cell cycle. In response to double-strand DNA breaks, promotes p53/TP53 phosphorylation on 'Ser-46' and subsequent apoptosis. Acts as a tumor suppressor by inducing cell death by an autophagy and caspase-dependent mechanism. Can reduce cell migration by regulating the expression of SPARC. This chain is Tumor protein p53-inducible nuclear protein 1 (TP53INP1), found in Homo sapiens (Human).